We begin with the raw amino-acid sequence, 622 residues long: 1-deoxy-D-xylulose-5-phosphate synthase (622 aa).

Residues His80 and 121-123 (GHS) each bind thiamine diphosphate. Residue Asp152 coordinates Mg(2+). Thiamine diphosphate is bound by residues 153–154 (GA), Asn181, Tyr288, and Glu370. Asn181 is a Mg(2+) binding site.

It belongs to the transketolase family. DXPS subfamily. Homodimer. Mg(2+) serves as cofactor. It depends on thiamine diphosphate as a cofactor.

The catalysed reaction is D-glyceraldehyde 3-phosphate + pyruvate + H(+) = 1-deoxy-D-xylulose 5-phosphate + CO2. Its pathway is metabolic intermediate biosynthesis; 1-deoxy-D-xylulose 5-phosphate biosynthesis; 1-deoxy-D-xylulose 5-phosphate from D-glyceraldehyde 3-phosphate and pyruvate: step 1/1. Functionally, catalyzes the acyloin condensation reaction between C atoms 2 and 3 of pyruvate and glyceraldehyde 3-phosphate to yield 1-deoxy-D-xylulose-5-phosphate (DXP). The chain is 1-deoxy-D-xylulose-5-phosphate synthase from Shewanella denitrificans (strain OS217 / ATCC BAA-1090 / DSM 15013).